We begin with the raw amino-acid sequence, 362 residues long: Adenosine kinase (362 aa).

Position 2 is an N-acetylalanine (Ala2). A Nuclear localization signal motif is present at residues 8-16 (PKPKKLKVE). Asp35 provides a ligand contact to adenosine. Ser49 serves as a coordination point for Mg(2+). At Tyr77 the chain carries Phosphotyrosine. Mg(2+) contacts are provided by Asp147 and Asn148. An adenosine-binding site is contributed by Gln306. Asp317 functions as the Proton acceptor in the catalytic mechanism.

Belongs to the carbohydrate kinase PfkB family. In terms of assembly, monomer. It depends on Mg(2+) as a cofactor. As to expression, widely expressed. Highest level in placenta, liver, muscle and kidney.

It is found in the nucleus. Its subcellular location is the cytoplasm. It catalyses the reaction adenosine + ATP = AMP + ADP + H(+). It functions in the pathway purine metabolism; AMP biosynthesis via salvage pathway; AMP from adenosine: step 1/1. Activity is inhibited by 5-iodotubercidin and 5'-amino-5'-deoxyadenosine. Catalyzes the phosphorylation of the purine nucleoside adenosine at the 5' position in an ATP-dependent manner. Serves as a potential regulator of concentrations of extracellular adenosine and intracellular adenine nucleotides. In Homo sapiens (Human), this protein is Adenosine kinase.